Consider the following 294-residue polypeptide: 4-hydroxy-tetrahydrodipicolinate synthase (294 aa).

T45 serves as a coordination point for pyruvate. The active-site Proton donor/acceptor is the Y133. K161 (schiff-base intermediate with substrate) is an active-site residue. Pyruvate is bound at residue I203.

Belongs to the DapA family. As to quaternary structure, homotetramer; dimer of dimers.

It is found in the cytoplasm. It catalyses the reaction L-aspartate 4-semialdehyde + pyruvate = (2S,4S)-4-hydroxy-2,3,4,5-tetrahydrodipicolinate + H2O + H(+). The protein operates within amino-acid biosynthesis; L-lysine biosynthesis via DAP pathway; (S)-tetrahydrodipicolinate from L-aspartate: step 3/4. In terms of biological role, catalyzes the condensation of (S)-aspartate-beta-semialdehyde [(S)-ASA] and pyruvate to 4-hydroxy-tetrahydrodipicolinate (HTPA). The sequence is that of 4-hydroxy-tetrahydrodipicolinate synthase from Shewanella sp. (strain W3-18-1).